The primary structure comprises 284 residues: 2-dehydro-3-deoxyphosphooctonate aldolase (284 aa).

This sequence belongs to the KdsA family.

Its subcellular location is the cytoplasm. It carries out the reaction D-arabinose 5-phosphate + phosphoenolpyruvate + H2O = 3-deoxy-alpha-D-manno-2-octulosonate-8-phosphate + phosphate. The protein operates within carbohydrate biosynthesis; 3-deoxy-D-manno-octulosonate biosynthesis; 3-deoxy-D-manno-octulosonate from D-ribulose 5-phosphate: step 2/3. It participates in bacterial outer membrane biogenesis; lipopolysaccharide biosynthesis. This chain is 2-dehydro-3-deoxyphosphooctonate aldolase, found in Methylobacterium radiotolerans (strain ATCC 27329 / DSM 1819 / JCM 2831 / NBRC 15690 / NCIMB 10815 / 0-1).